We begin with the raw amino-acid sequence, 64 residues long: Large ribosomal subunit protein bL28 (64 aa).

Belongs to the bacterial ribosomal protein bL28 family.

The chain is Large ribosomal subunit protein bL28 from Syntrophobacter fumaroxidans (strain DSM 10017 / MPOB).